A 238-amino-acid chain; its full sequence is MTALVVTGTGTGVGKTVVTAAIGALAHDRHHAVAVVKPAQTGVGPGELGDVDLVRDLTGITDVHELARYPDPLAPATAARRSGHRAVDLDELAARIGTLADSRDLVLVEGAGGLLVRYDAGGATLADLARVLRAPVLVVTAAGLGALNDTALTLEALAHRGLDLAGVVVGSWPAEPDLACRCNLIDLESLAARPLAGVLPAGAGLLARLEFLAVARASLQPALGGTFRAQEFRARYET.

Glycine 12 to valine 17 contributes to the ATP binding site. Threonine 16 contacts Mg(2+). Lysine 37 is an active-site residue. Threonine 41 serves as a coordination point for substrate. ATP-binding positions include aspartate 50, glutamate 109 to glycine 112, glycine 170 to serine 171, and proline 200 to glycine 202. Mg(2+)-binding residues include aspartate 50 and glutamate 109.

It belongs to the dethiobiotin synthetase family. As to quaternary structure, homodimer. Requires Mg(2+) as cofactor.

It localises to the cytoplasm. The catalysed reaction is (7R,8S)-7,8-diammoniononanoate + CO2 + ATP = (4R,5S)-dethiobiotin + ADP + phosphate + 3 H(+). It participates in cofactor biosynthesis; biotin biosynthesis; biotin from 7,8-diaminononanoate: step 1/2. Its function is as follows. Catalyzes a mechanistically unusual reaction, the ATP-dependent insertion of CO2 between the N7 and N8 nitrogen atoms of 7,8-diaminopelargonic acid (DAPA, also called 7,8-diammoniononanoate) to form a ureido ring. In Frankia casuarinae (strain DSM 45818 / CECT 9043 / HFP020203 / CcI3), this protein is ATP-dependent dethiobiotin synthetase BioD.